We begin with the raw amino-acid sequence, 397 residues long: MSIMDDLMEGRIKLYEIERHVPVDEAVRIRREFIERTCGVKLEHVSNYSIDMERASRRNIENPIGVVQIPLGVAGPLRVRGEHADGEYYVPLATSEGALVASVNRGCSVITRAGGATVRVTGDSMTRAPVIRTGSVVEALQLREWIYENMDALREEAESTTRHGKLVKIDPIIVAGSYVYPRFVYTTGDSMGMNMVTIATERALELLTRETGAHVIALSGNLCTDKKPAAVNLIEGRGKSITAEITVPGEMVESVLKTTPEAVVEVNTAKNLIGSAAAGSMGFNAHYANIIGAIFLATGQDEAHIVEGSLGVTIAEERKGDLYFAVNLPDVPLATVGGGTGLETASECLDIMGVRGGGRVHAFAEIVGGAVLAGELSLMGALAAGHLARAHSELGRG.

Active-site charge relay system residues include Glu-96 and Asp-301. The Proton donor role is filled by His-391.

The protein belongs to the HMG-CoA reductase family.

It catalyses the reaction (R)-mevalonate + 2 NADP(+) + CoA = (3S)-3-hydroxy-3-methylglutaryl-CoA + 2 NADPH + 2 H(+). The protein operates within metabolic intermediate biosynthesis; (R)-mevalonate biosynthesis; (R)-mevalonate from acetyl-CoA: step 3/3. Its function is as follows. Converts HMG-CoA to mevalonate. This is 3-hydroxy-3-methylglutaryl-coenzyme A reductase (hmgA) from Methanothermobacter thermautotrophicus (strain ATCC 29096 / DSM 1053 / JCM 10044 / NBRC 100330 / Delta H) (Methanobacterium thermoautotrophicum).